A 164-amino-acid polypeptide reads, in one-letter code: 3-dehydroquinate dehydratase (164 aa).

Catalysis depends on Y22, which acts as the Proton acceptor. N73, H79, and D86 together coordinate substrate. H99 acts as the Proton donor in catalysis. Substrate-binding positions include I100–S101 and R110.

Belongs to the type-II 3-dehydroquinase family. As to quaternary structure, homododecamer.

The catalysed reaction is 3-dehydroquinate = 3-dehydroshikimate + H2O. It participates in metabolic intermediate biosynthesis; chorismate biosynthesis; chorismate from D-erythrose 4-phosphate and phosphoenolpyruvate: step 3/7. Its function is as follows. Catalyzes a trans-dehydration via an enolate intermediate. This is 3-dehydroquinate dehydratase from Aliarcobacter butzleri (strain RM4018) (Arcobacter butzleri).